Reading from the N-terminus, the 270-residue chain is Phosphatidylglycerol--prolipoprotein diacylglyceryl transferase (270 aa).

4 consecutive transmembrane segments (helical) span residues 19–39, 56–76, 92–112, and 116–136; these read FPVY…LWLA, LVLI…VIFE, QGGL…VLFA, and GVSF…GQAI. A 1,2-diacyl-sn-glycero-3-phospho-(1'-sn-glycerol) is bound at residue Arg138. 3 consecutive transmembrane segments (helical) span residues 178-198, 206-226, and 236-256; these read HPTF…LLAL, GELF…VEGL, and LRIA…FIIV.

The protein belongs to the Lgt family.

It localises to the cell membrane. The enzyme catalyses L-cysteinyl-[prolipoprotein] + a 1,2-diacyl-sn-glycero-3-phospho-(1'-sn-glycerol) = an S-1,2-diacyl-sn-glyceryl-L-cysteinyl-[prolipoprotein] + sn-glycerol 1-phosphate + H(+). It functions in the pathway protein modification; lipoprotein biosynthesis (diacylglyceryl transfer). Its function is as follows. Catalyzes the transfer of the diacylglyceryl group from phosphatidylglycerol to the sulfhydryl group of the N-terminal cysteine of a prolipoprotein, the first step in the formation of mature lipoproteins. This Bacillus cereus (strain B4264) protein is Phosphatidylglycerol--prolipoprotein diacylglyceryl transferase.